The chain runs to 501 residues: Nucleic-acid-binding protein from transposon X-element (501 aa).

Disordered stretches follow at residues serine 20–asparagine 71 and alanine 105–proline 128. The CCHC-type zinc finger occupies valine 285–lysine 302. Disordered stretches follow at residues arginine 353–glycine 385 and glutamine 400–serine 443. Residues glutamine 407–arginine 422 show a composition bias toward low complexity. The span at glycine 434–serine 443 shows a compositional bias: polar residues.

Its subcellular location is the virion. Its function is as follows. Strongly basic protein that binds directly to retroviral RNA and may be involved in its packaging and in the reverse transcription process. The protein is Nucleic-acid-binding protein from transposon X-element of Drosophila melanogaster (Fruit fly).